The sequence spans 257 residues: Coenzyme F420:L-glutamate ligase (257 aa).

Residues Val-9–Val-12, Ser-38–Thr-39, and Lys-43 each bind GTP. Asp-113 contributes to the a divalent metal cation binding site. Asn-116 serves as a coordination point for GTP. 3 residues coordinate a divalent metal cation: Asp-154, Thr-155, and Glu-212. A GTP-binding site is contributed by Thr-210–Thr-217.

Belongs to the CofE family. As to quaternary structure, homodimer. It depends on Mg(2+) as a cofactor. Requires Mn(2+) as cofactor. K(+) is required as a cofactor.

The catalysed reaction is oxidized coenzyme F420-0 + GTP + L-glutamate = oxidized coenzyme F420-1 + GDP + phosphate + H(+). The enzyme catalyses oxidized coenzyme F420-1 + GTP + L-glutamate = oxidized coenzyme F420-2 + GDP + phosphate + H(+). Its pathway is cofactor biosynthesis; coenzyme F420 biosynthesis. Catalyzes the GTP-dependent successive addition of two or more gamma-linked L-glutamates to the L-lactyl phosphodiester of 7,8-didemethyl-8-hydroxy-5-deazariboflavin (F420-0) to form coenzyme F420-0-glutamyl-glutamate (F420-2) or polyglutamated F420 derivatives. This chain is Coenzyme F420:L-glutamate ligase, found in Haloarcula marismortui (strain ATCC 43049 / DSM 3752 / JCM 8966 / VKM B-1809) (Halobacterium marismortui).